The following is a 226-amino-acid chain: UPF0758 protein PSEEN5431 (226 aa).

An MPN domain is found at 102–224 (VMDNPLAVRR…PLSMIEHGWL (123 aa)). Zn(2+) contacts are provided by His-173, His-175, and Asp-186. The JAMM motif motif lies at 173 to 186 (HNHPSGNCEPSQDD).

The protein belongs to the UPF0758 family.

The sequence is that of UPF0758 protein PSEEN5431 from Pseudomonas entomophila (strain L48).